The primary structure comprises 464 residues: tRNA-2-methylthio-N(6)-dimethylallyladenosine synthase (464 aa).

In terms of domain architecture, MTTase N-terminal spans Gly19–Leu135. [4Fe-4S] cluster is bound by residues Cys28, Cys64, Cys98, Cys170, Cys174, and Cys177. The region spanning Arg156–Arg394 is the Radical SAM core domain. The TRAM domain maps to Lys396 to Leu464.

Belongs to the methylthiotransferase family. MiaB subfamily. In terms of assembly, monomer. The cofactor is [4Fe-4S] cluster.

Its subcellular location is the cytoplasm. It catalyses the reaction N(6)-dimethylallyladenosine(37) in tRNA + (sulfur carrier)-SH + AH2 + 2 S-adenosyl-L-methionine = 2-methylsulfanyl-N(6)-dimethylallyladenosine(37) in tRNA + (sulfur carrier)-H + 5'-deoxyadenosine + L-methionine + A + S-adenosyl-L-homocysteine + 2 H(+). Its function is as follows. Catalyzes the methylthiolation of N6-(dimethylallyl)adenosine (i(6)A), leading to the formation of 2-methylthio-N6-(dimethylallyl)adenosine (ms(2)i(6)A) at position 37 in tRNAs that read codons beginning with uridine. The sequence is that of tRNA-2-methylthio-N(6)-dimethylallyladenosine synthase from Prochlorococcus marinus (strain AS9601).